The primary structure comprises 157 residues: Protein Smg homolog (157 aa).

This sequence belongs to the Smg family.

This is Protein Smg homolog from Shewanella denitrificans (strain OS217 / ATCC BAA-1090 / DSM 15013).